The sequence spans 129 residues: L-ectoine synthase (129 aa).

The protein belongs to the ectoine synthase family.

The catalysed reaction is (2S)-4-acetamido-2-aminobutanoate = L-ectoine + H2O. It functions in the pathway amine and polyamine biosynthesis; ectoine biosynthesis; L-ectoine from L-aspartate 4-semialdehyde: step 3/3. Catalyzes the circularization of gamma-N-acetyl-alpha,gamma-diaminobutyric acid (ADABA) to ectoine (1,4,5,6-tetrahydro-2-methyl-4-pyrimidine carboxylic acid), which is an excellent osmoprotectant. The protein is L-ectoine synthase of Desulfosudis oleivorans (strain DSM 6200 / JCM 39069 / Hxd3) (Desulfococcus oleovorans).